Consider the following 152-residue polypeptide: RxLR effector protein Avrblb1 (152 aa).

An N-terminal signal peptide occupies residues 1-24 (MRSLLLTVLLNLVVLLATTGAVSS). A RxLR-dEER motif is present at residues 51–72 (RSLRGDYNNEVTKEPNTSDEER). Residues 54-56 (RGD) carry the RGD RLK-binding motif motif. N-linked (GlcNAc...) asparagine glycosylation occurs at Asn-66. The segment at 99 to 152 (QSKTVLRYEDKLFTALYKSGETPRSLRTKHLDKASASVFFNRFKKWYDKNVGPS) is w motif.

This sequence belongs to the RxLR effector family. Interacts with host defense protein RGA2/Rpi-blb1. Interacts with host legume-type lectin receptor kinase LECRK19.

Its subcellular location is the secreted. The protein localises to the host nucleus. The protein resides in the host nucleolus. It localises to the host cell membrane. Secreted effector that acts as an elicitor of hypersensitive response (HR) specifically on plants carrying defense protein RGA2/Rpi-blb1. Enhances P.infestans colonization of plant hosts Nicotiana benthamiana and potato Solanum bulbocastanum leaves. Associates with host legume-type lectin receptor kinases and disrupts attachments between the host plasma membrane and cell wall. The polypeptide is RxLR effector protein Avrblb1 (Phytophthora infestans (strain T30-4) (Potato late blight agent)).